A 347-amino-acid polypeptide reads, in one-letter code: MDYKTSGVDIEAGREFVSEIKQAVEATHTSNVIEGIGGFGGLFRIPIDSFKKPVLVSGTDGVGTKLELAQSKNFHFEVGIDLVAMCMNDIITSGARPLFFLDYIATGKLDKKQLLRVVQGISHGCGENNCSLLGGETAEMPGFYSKNKYDLAGFCVGIVDEDKLINGKKVSENDLIIALKSNGVHSNGFSLVRKIIQNNNQIDKEFEKVSHLNFYDELLKPTKIYNNVINQMLSEDIEIKAMSHITGGGIPENLPRCIPSDFIPYINTSSWQIPTLFKFLKEKGSIPERDFWNTFNLGVGFCLIIDKQFKDAILSICKDYGIDSWEIGKIVRKNDSTISKFLPEILT.

This sequence belongs to the AIR synthase family.

It is found in the cytoplasm. It carries out the reaction 2-formamido-N(1)-(5-O-phospho-beta-D-ribosyl)acetamidine + ATP = 5-amino-1-(5-phospho-beta-D-ribosyl)imidazole + ADP + phosphate + H(+). The protein operates within purine metabolism; IMP biosynthesis via de novo pathway; 5-amino-1-(5-phospho-D-ribosyl)imidazole from N(2)-formyl-N(1)-(5-phospho-D-ribosyl)glycinamide: step 2/2. This chain is Phosphoribosylformylglycinamidine cyclo-ligase, found in Prochlorococcus marinus (strain MIT 9301).